The sequence spans 157 residues: 6,7-dimethyl-8-ribityllumazine synthase (157 aa).

Residues Phe22, 57 to 59 (AYE), and 81 to 83 (TVI) each bind 5-amino-6-(D-ribitylamino)uracil. 86 to 87 (GT) serves as a coordination point for (2S)-2-hydroxy-3-oxobutyl phosphate. Catalysis depends on His89, which acts as the Proton donor. 5-amino-6-(D-ribitylamino)uracil is bound at residue Phe114. Residue Arg128 participates in (2S)-2-hydroxy-3-oxobutyl phosphate binding.

This sequence belongs to the DMRL synthase family. In terms of assembly, forms an icosahedral capsid composed of 60 subunits, arranged as a dodecamer of pentamers.

The catalysed reaction is (2S)-2-hydroxy-3-oxobutyl phosphate + 5-amino-6-(D-ribitylamino)uracil = 6,7-dimethyl-8-(1-D-ribityl)lumazine + phosphate + 2 H2O + H(+). It functions in the pathway cofactor biosynthesis; riboflavin biosynthesis; riboflavin from 2-hydroxy-3-oxobutyl phosphate and 5-amino-6-(D-ribitylamino)uracil: step 1/2. Catalyzes the formation of 6,7-dimethyl-8-ribityllumazine by condensation of 5-amino-6-(D-ribitylamino)uracil with 3,4-dihydroxy-2-butanone 4-phosphate. This is the penultimate step in the biosynthesis of riboflavin. This Haemophilus influenzae (strain 86-028NP) protein is 6,7-dimethyl-8-ribityllumazine synthase.